The chain runs to 71 residues: Disintegrin simusmin (71 aa).

Residues 1–71 (AGEECDCGSP…SADCPRNPFH (71 aa)) enclose the Disintegrin domain. 6 cysteine pairs are disulfide-bonded: Cys5/Cys20, Cys7/Cys15, Cys14/Cys37, Cys28/Cys34, Cys33/Cys58, and Cys46/Cys65. A Cell attachment site motif is present at residues 50–52 (RGD).

Belongs to the venom metalloproteinase (M12B) family. P-II subfamily. P-IIa sub-subfamily. As to quaternary structure, monomer. As to expression, expressed by the venom gland.

The protein resides in the secreted. In terms of biological role, inhibits ADP- (IC(50)=56 nM) and collagen-induced (IC(50)=49 nM) aggregation of human platelets. In vitro, inhibits adhesion of endothelial cells to vitronectin, type-I collagen and, to a lower degree, fibronectin and laminin. In Crotalus simus (Central American rattlesnake), this protein is Disintegrin simusmin.